The sequence spans 592 residues: ATP-dependent lipid A-core flippase (592 aa).

6 helical membrane passes run 31 to 51 (LSSFILAMVAMGVVAATEGII), 76 to 96 (AMLVGIAVVRGVAQFGATYFL), 134 to 154 (AVIFEVNQVLQVLTGVFITLV), 161 to 181 (LALLIFLFYTNWRLTLVVAVI), 261 to 281 (VTQFLAALALSVILAIAMVQA), and 288 to 308 (VGGFTGFVMAMLLLISPLKHL). Residues 35–317 (ILAMVAMGVV…LTDVNQPMQR (283 aa)) enclose the ABC transmembrane type-1 domain. In terms of domain architecture, ABC transporter spans 349–587 (LRFEHVTFRY…DGLYAGLHRI (239 aa)). Residue 383–390 (GPSGSGKT) coordinates ATP.

It belongs to the ABC transporter superfamily. Lipid exporter (TC 3.A.1.106) family. In terms of assembly, homodimer.

It is found in the cell inner membrane. The enzyme catalyses ATP + H2O + lipid A-core oligosaccharideSide 1 = ADP + phosphate + lipid A-core oligosaccharideSide 2.. Functionally, involved in lipopolysaccharide (LPS) biosynthesis. Translocates lipid A-core from the inner to the outer leaflet of the inner membrane. Transmembrane domains (TMD) form a pore in the inner membrane and the ATP-binding domain (NBD) is responsible for energy generation. This Ralstonia nicotianae (strain ATCC BAA-1114 / GMI1000) (Ralstonia solanacearum) protein is ATP-dependent lipid A-core flippase.